Reading from the N-terminus, the 192-residue chain is dTTP/UTP pyrophosphatase (192 aa).

The active-site Proton acceptor is aspartate 70.

This sequence belongs to the Maf family. YhdE subfamily. Requires a divalent metal cation as cofactor.

The protein localises to the cytoplasm. It carries out the reaction dTTP + H2O = dTMP + diphosphate + H(+). The catalysed reaction is UTP + H2O = UMP + diphosphate + H(+). In terms of biological role, nucleoside triphosphate pyrophosphatase that hydrolyzes dTTP and UTP. May have a dual role in cell division arrest and in preventing the incorporation of modified nucleotides into cellular nucleic acids. In Clostridium perfringens (strain SM101 / Type A), this protein is dTTP/UTP pyrophosphatase.